Consider the following 340-residue polypeptide: GPALPP motifs-containing protein 1 (340 aa).

The tract at residues 1–304 (MARDLIGPAL…PQERIPFDRD (304 aa)) is disordered. Ala-2 carries the N-acetylalanine modification. The GPALPP motif 1 signature appears at 7–12 (GPALPP). Ser-28 carries the post-translational modification Phosphoserine. The GPALPP motif 2 signature appears at 32-37 (GPALPP). The span at 60–69 (GNQESEEDDS) shows a compositional bias: acidic residues. The GPALPP motif 3 signature appears at 92 to 97 (GPALPP). Ser-105 carries the post-translational modification Phosphoserine. Positions 107–116 (PRPIIGPALP) are enriched in pro residues. Residues 112-117 (GPALPP) carry the GPALPP motif 4 motif. The segment covering 124–133 (QKSDKGRDDP) has biased composition (basic and acidic residues). Residue Thr-138 is modified to Phosphothreonine. Residues Ser-140 and Ser-141 each carry the phosphoserine modification. Basic and acidic residues-rich tracts occupy residues 163-187 (EFEK…KPIV), 227-261 (PADR…KRLA), 269-279 (ESKRSESLMDI), and 287-304 (KAAE…FDRD). Lys-271 is covalently cross-linked (Glycyl lysine isopeptide (Lys-Gly) (interchain with G-Cter in SUMO2)). Residue Lys-308 forms a Glycyl lysine isopeptide (Lys-Gly) (interchain with G-Cter in SUMO2) linkage.

The sequence is that of GPALPP motifs-containing protein 1 (GPALPP1) from Homo sapiens (Human).